A 543-amino-acid chain; its full sequence is MLAALIYTILAILLSVLATSYICIIYGVKRRVLQPVKTKNSTEINHNAYQKYTQAPGPRPWPIIGNLHLLDRYRDSPFAGFTALAQQYGDIYSLTFGHTRCLVVNNLELIREVLNQNGKVMSGRPDFIRYHKLFGGERSNSLALCDWSQLQQKRRNLARRHCSPREFSCFYMKMSQIGCEEMEHWNRELGNQLVPGEPINIKPLILKACANMFSQYMCSLRFDYDDVDFQQIVQYFDEIFWEINQGHPLDFLPWLYPFYQRHLNKIINWSSTIRGFIMERIIRHRELSVDLDEPDRDFTDALLKSLLEDKDVSRNTIIFMLEDFIGGHSAVGNLVMLVLAYIAKNVDIGRRIQEEIDAIIEEENRSINLLDMNAMPYTMATIFEVLRYSSSPIVPHVATEDTVISGYGVTKGTIVFINNYVLNTSEKFWVNPKEFNPLRFLEPSKEQSPKNSKGSDSGIESDNEKLQLKRNIPHFLPFSIGKRTCIGQNLVRGFGFLVVVNVMQRYNISSHNPSTIKISPESLALPADCFPLVLTPREKIGPL.

Ser-219 carries the phosphoserine modification. The tract at residues 440–460 is disordered; that stretch reads FLEPSKEQSPKNSKGSDSGIE. A compositionally biased stretch (polar residues) spans 449–460; the sequence is PKNSKGSDSGIE. Cys-485 contacts heme.

The protein belongs to the cytochrome P450 family. The cofactor is heme.

It is found in the endoplasmic reticulum membrane. The protein resides in the microsome membrane. In terms of biological role, required for correct development of the embryonic midline glial cells which are necessary for the formation of distinct segmental commissures. The protein is Cytochrome P450 307a1 (spo) of Drosophila melanogaster (Fruit fly).